Here is a 412-residue protein sequence, read N- to C-terminus: Phosphoribosylamine--glycine ligase (412 aa).

An ATP-grasp domain is found at 108 to 309 (KSIMKKYGVP…LAQAIIDILA (202 aa)). 134–190 (LDEKGVPLVIKADGLAAGKGVTVAFDIETAKSALADIFSGSQGKVVIEEFLDGEEFS) contacts ATP. Mg(2+) is bound by residues E279 and N281.

This sequence belongs to the GARS family. It depends on Mg(2+) as a cofactor. The cofactor is Mn(2+).

It catalyses the reaction 5-phospho-beta-D-ribosylamine + glycine + ATP = N(1)-(5-phospho-beta-D-ribosyl)glycinamide + ADP + phosphate + H(+). Its pathway is purine metabolism; IMP biosynthesis via de novo pathway; N(1)-(5-phospho-D-ribosyl)glycinamide from 5-phospho-alpha-D-ribose 1-diphosphate: step 2/2. The chain is Phosphoribosylamine--glycine ligase from Lactococcus lactis subsp. lactis (strain IL1403) (Streptococcus lactis).